A 340-amino-acid polypeptide reads, in one-letter code: L-galactonate-5-dehydrogenase (340 aa).

C40, C65, C92, C95, C98, C106, and E146 together coordinate Zn(2+).

This sequence belongs to the zinc-containing alcohol dehydrogenase family. Requires Zn(2+) as cofactor.

The enzyme catalyses L-galactonate + NAD(+) = keto-D-tagaturonate + NADH + H(+). With respect to regulation, inhibited by EDTA. Catalyzes the oxidation of L-galactonate to D-tagaturonate. Required for growth on L-galactonate as the sole carbon source. In vitro, can also use L-gulonate. This is L-galactonate-5-dehydrogenase (lgoD) from Escherichia coli (strain K12).